Here is a 570-residue protein sequence, read N- to C-terminus: Multidrug and toxin extrusion protein 1 (570 aa).

An N-acetylmethionine modification is found at Met-1. Residues 1–37 (MEAPEEPAPVRGGPEATLEIHGSRFLRLSAFREELRA) are Cytoplasmic-facing. Residues 38–58 (LLVLAGPAFLVQLMVFLISFI) traverse the membrane as a helical segment. Residues 59–72 (SSVFCGHLGKLELD) are Extracellular-facing. The chain crosses the membrane as a helical span at residues 73–93 (AVTLAIAVINVTGVSVGFGLS). At 94–120 (SACDTLISQTYGSQNLKHVGVILQRSA) the chain is on the cytoplasmic side. The chain crosses the membrane as a helical span at residues 121-141 (LILLLCCFPCWALFLNTQHIL). Residues 142 to 152 (LLFRQDPDVSR) are Extracellular-facing. The chain crosses the membrane as a helical span at residues 153 to 173 (LTQTYVTIFIPALPATFLYML). The Cytoplasmic segment spans residues 174-176 (QVK). The helical transmembrane segment at 177 to 197 (YLLNQGIVLPQIVTGVAANLV) threads the bilayer. The Extracellular segment spans residues 198 to 216 (NALANYLFLHQLHLGAIGS). The chain crosses the membrane as a helical span at residues 217 to 237 (ALANLISQYTLALLLFFYILG). Residues 238 to 251 (KKLHQATWGGWSLE) are Cytoplasmic-facing. The helical transmembrane segment at 252–272 (CLQDWASFLHLAVPSMLMLCM) threads the bilayer. Residues 273 to 295 (EWWAYEVGSFLSGILGMVELGAQ) lie on the Extracellular side of the membrane. Residues 296 to 316 (SIVYELAIIVYMVPAGFSVAA) traverse the membrane as a helical segment. Over 317–336 (SVRVGNALGAGDMEQARKSS) the chain is Cytoplasmic. Residues 337–357 (TVSLLITVLFAVAFSVLLLSC) traverse the membrane as a helical segment. The Extracellular portion of the chain corresponds to 358–370 (KDHVGYIFTTDRD). Residues 371–391 (IINLVAQVVPIYAVSHLFEAL) form a helical membrane-spanning segment. The Cytoplasmic segment spans residues 392-408 (ACTSGGVLRGSGNQKVG). A helical membrane pass occupies residues 409-429 (AIVNTIGYYVVGLPIGIALMF). Residues 430 to 437 (ATKLGVMG) are Extracellular-facing. A helical transmembrane segment spans residues 438-458 (LWSGIIICTVFQAVCFLGFII). Residues 459–546 (QLNWKKACQQ…LSRKQLVLRR (88 aa)) are Cytoplasmic-facing. The interval 508 to 534 (DVGKTGETQSDQQMRQEEPLPEHPQDS) is disordered. Basic and acidic residues predominate over residues 521-533 (MRQEEPLPEHPQD). Residues 547–567 (GLLLLGVFLILLVGILVRFYV) form a helical membrane-spanning segment. Topologically, residues 568-570 (RIQ) are extracellular.

It belongs to the multi antimicrobial extrusion (MATE) (TC 2.A.66.1) family.

It localises to the cell membrane. The protein localises to the apical cell membrane. The catalysed reaction is thiamine(out) + H(+)(in) = thiamine(in) + H(+)(out). It carries out the reaction estrone 3-sulfate(in) + H(+)(out) = estrone 3-sulfate(out) + H(+)(in). It catalyses the reaction creatinine(in) + H(+)(out) = creatinine(out) + H(+)(in). The enzyme catalyses agmatine(in) + H(+)(out) = agmatine(out) + H(+)(in). In terms of biological role, multidrug efflux pump that functions as a H(+)/organic cation antiporter. Plays a physiological role in the excretion of cationic compounds including endogenous metabolites, drugs, toxins through the kidney and liver, into urine and bile respectively. Mediates the efflux of endogenous compounds such as creatinine, vitamin B1/thiamine, agmatine and estrone-3-sulfate. May also contribute to regulate the transport of cationic compounds in testis across the blood-testis-barrier. This is Multidrug and toxin extrusion protein 1 (SLC47A1) from Pongo abelii (Sumatran orangutan).